Reading from the N-terminus, the 272-residue chain is Prohibitin 1 (272 aa).

Residue Ala2 is modified to N-acetylalanine. Thr91 carries the post-translational modification Phosphothreonine. N6-acetyllysine is present on residues Lys128 and Lys186. Positions 177 to 211 (KEFTEAVEAKQVAQQEAERARFVVEKAEQQKKAAI) form a coiled coil. N6-acetyllysine; alternate is present on Lys202. At Lys202 the chain carries N6-succinyllysine; alternate. Phosphotyrosine is present on Tyr249.

Belongs to the prohibitin family. As to quaternary structure, interacts with PHB2. Interacts with STOML2. Interacts with CD86 (via cytoplasmic domain); the interactions increases after priming with CD40. (Microbial infection) Interacts with human enterovirus 71/EV-71 capsid protein VP0, protein 3CD and protease 3C. In terms of tissue distribution, widely expressed in different tissues.

Its subcellular location is the mitochondrion inner membrane. The protein resides in the nucleus. It is found in the cell membrane. The protein localises to the cytoplasm. With respect to regulation, target of the anti-cancer drug Rocaglamide (Roc-A). Protein with pleiotropic attributes mediated in a cell-compartment- and tissue-specific manner, which include the plasma membrane-associated cell signaling functions, mitochondrial chaperone, and transcriptional co-regulator of transcription factors in the nucleus. Plays a role in adipose tissue and glucose homeostasis in a sex-specific manner. Contributes to pulmonary vascular remodeling by accelerating proliferation of pulmonary arterial smooth muscle cells. Its function is as follows. In the mitochondria, together with PHB2, forms large ring complexes (prohibitin complexes) in the inner mitochondrial membrane (IMM) and functions as a chaperone protein that stabilizes mitochondrial respiratory enzymes and maintains mitochondrial integrity in the IMM, which is required for mitochondrial morphogenesis, neuronal survival, and normal lifespan. The prohibitin complex, with DNAJC19, regulates cardiolipin remodeling and the protein turnover of OMA1 in a cardiolipin-binding manner. Regulates mitochondrial respiration activity playing a role in cellular aging. The prohibitin complex plays a role of mitophagy receptor involved in targeting mitochondria for autophagic degradation. Involved in mitochondrial-mediated antiviral innate immunity, activates RIG-I-mediated signal transduction and production of IFNB1 and pro-inflammatory cytokine IL6. Functionally, in the nucleus, acts as a transcription coregulator, enhances promoter binding by TP53, a transcription factor it activates, but reduces the promoter binding by E2F1, a transcription factor it represses. Interacts with STAT3 to affect IL17 secretion in T-helper Th17 cells. In terms of biological role, in the plasma membrane, cooperates with CD86 to mediate CD86-signaling in B lymphocytes that regulates the level of IgG1 produced through the activation of distal signaling intermediates. Upon CD40 engagement, required to activate NF-kappa-B signaling pathway via phospholipase C and protein kinase C activation. (Microbial infection) In neuronal cells, cell surface-expressed PHB1 is involved in human enterovirus 71/EV-71 entry into neuronal cells specifically, while membrane-bound mitochondrial PHB1 associates with the virus replication complex and facilitates viral replication. May serve as a receptor for EV71. The chain is Prohibitin 1 (Phb1) from Mus musculus (Mouse).